The primary structure comprises 235 residues: Leucyl/phenylalanyl-tRNA--protein transferase (235 aa).

Belongs to the L/F-transferase family.

The protein localises to the cytoplasm. It catalyses the reaction N-terminal L-lysyl-[protein] + L-leucyl-tRNA(Leu) = N-terminal L-leucyl-L-lysyl-[protein] + tRNA(Leu) + H(+). The catalysed reaction is N-terminal L-arginyl-[protein] + L-leucyl-tRNA(Leu) = N-terminal L-leucyl-L-arginyl-[protein] + tRNA(Leu) + H(+). It carries out the reaction L-phenylalanyl-tRNA(Phe) + an N-terminal L-alpha-aminoacyl-[protein] = an N-terminal L-phenylalanyl-L-alpha-aminoacyl-[protein] + tRNA(Phe). Functions in the N-end rule pathway of protein degradation where it conjugates Leu, Phe and, less efficiently, Met from aminoacyl-tRNAs to the N-termini of proteins containing an N-terminal arginine or lysine. This chain is Leucyl/phenylalanyl-tRNA--protein transferase, found in Magnetococcus marinus (strain ATCC BAA-1437 / JCM 17883 / MC-1).